We begin with the raw amino-acid sequence, 366 residues long: Mitogen-activated protein kinase 13 (366 aa).

The region spanning 25 to 308 (YLAPAHVGSG…AAQALAHPFF (284 aa)) is the Protein kinase domain. ATP-binding positions include 31-39 (VGSGAYGAV) and K54. D150 (proton acceptor) is an active-site residue. T180 carries the phosphothreonine; by MAP2K3, MAP2K4, MAP2K6 and MAP2K7 modification. The TXY motif lies at 180–182 (TGY). Residue Y182 is modified to Phosphotyrosine. S350 bears the Phosphoserine mark.

It belongs to the protein kinase superfamily. CMGC Ser/Thr protein kinase family. MAP kinase subfamily. In terms of assembly, interacts with MAPK8IP2. Mg(2+) serves as cofactor. In terms of processing, dually phosphorylated on Thr-180 and Tyr-182 by MAP2K3/MKK3, MAP2K4/MKK4, MAP2K6/MKK6 and MAP2K7/MKK7, which activates the enzyme. Dephosphorylated by dual specificity phosphatase DUSP1.

It carries out the reaction L-seryl-[protein] + ATP = O-phospho-L-seryl-[protein] + ADP + H(+). The catalysed reaction is L-threonyl-[protein] + ATP = O-phospho-L-threonyl-[protein] + ADP + H(+). Activated by phosphorylation on threonine and tyrosine by dual specificity kinases, MAP2K3/MKK3, MAP2K6/MKK6, MAP2K4/MKK4 and MAP2K7/MKK7. Activation by ultraviolet radiation, hyperosmotic shock, anisomycin or by TNF-alpha is mediated by MAP2K3/MKK3. Inhibited by dual specificity phosphatase DUSP1. Its function is as follows. Serine/threonine kinase which acts as an essential component of the MAP kinase signal transduction pathway. MAPK13 is one of the four p38 MAPKs which play an important role in the cascades of cellular responses evoked by extracellular stimuli such as pro-inflammatory cytokines or physical stress leading to direct activation of transcription factors such as ELK1 and ATF2. Accordingly, p38 MAPKs phosphorylate a broad range of proteins and it has been estimated that they may have approximately 200 to 300 substrates each. MAPK13 is one of the less studied p38 MAPK isoforms. Some of the targets are downstream kinases such as MAPKAPK2, which are activated through phosphorylation and further phosphorylate additional targets. Plays a role in the regulation of protein translation by phosphorylating and inactivating EEF2K. Involved in cytoskeletal remodeling through phosphorylation of MAPT and STMN1. Mediates UV irradiation induced up-regulation of the gene expression of CXCL14. Plays an important role in the regulation of epidermal keratinocyte differentiation, apoptosis and skin tumor development. Phosphorylates the transcriptional activator MYB in response to stress which leads to rapid MYB degradation via a proteasome-dependent pathway. MAPK13 also phosphorylates and down-regulates PRKD1 during regulation of insulin secretion in pancreatic beta cells. This chain is Mitogen-activated protein kinase 13 (Mapk13), found in Mus musculus (Mouse).